The sequence spans 487 residues: Bifunctional protein HldE (487 aa).

The segment at 1–326 is ribokinase; that stretch reads MERREVESFF…QEIVAEVGHG (326 aa). Residue 205 to 208 coordinates ATP; that stretch reads NRKE. D275 is a catalytic residue. The interval 356–487 is cytidylyltransferase; that stretch reads FTNGCFDLLH…RIIEKILSSY (132 aa).

The protein in the N-terminal section; belongs to the carbohydrate kinase PfkB family. It in the C-terminal section; belongs to the cytidylyltransferase family. Homodimer.

The catalysed reaction is D-glycero-beta-D-manno-heptose 7-phosphate + ATP = D-glycero-beta-D-manno-heptose 1,7-bisphosphate + ADP + H(+). It carries out the reaction D-glycero-beta-D-manno-heptose 1-phosphate + ATP + H(+) = ADP-D-glycero-beta-D-manno-heptose + diphosphate. The protein operates within nucleotide-sugar biosynthesis; ADP-L-glycero-beta-D-manno-heptose biosynthesis; ADP-L-glycero-beta-D-manno-heptose from D-glycero-beta-D-manno-heptose 7-phosphate: step 1/4. Its pathway is nucleotide-sugar biosynthesis; ADP-L-glycero-beta-D-manno-heptose biosynthesis; ADP-L-glycero-beta-D-manno-heptose from D-glycero-beta-D-manno-heptose 7-phosphate: step 3/4. Functionally, catalyzes the phosphorylation of D-glycero-D-manno-heptose 7-phosphate at the C-1 position to selectively form D-glycero-beta-D-manno-heptose-1,7-bisphosphate. Catalyzes the ADP transfer from ATP to D-glycero-beta-D-manno-heptose 1-phosphate, yielding ADP-D-glycero-beta-D-manno-heptose. This Citrifermentans bemidjiense (strain ATCC BAA-1014 / DSM 16622 / JCM 12645 / Bem) (Geobacter bemidjiensis) protein is Bifunctional protein HldE.